We begin with the raw amino-acid sequence, 77 residues long: Small ribosomal subunit protein bS18 (77 aa).

It belongs to the bacterial ribosomal protein bS18 family. In terms of assembly, part of the 30S ribosomal subunit. Forms a tight heterodimer with protein bS6.

In terms of biological role, binds as a heterodimer with protein bS6 to the central domain of the 16S rRNA, where it helps stabilize the platform of the 30S subunit. The sequence is that of Small ribosomal subunit protein bS18 from Lactobacillus gasseri (strain ATCC 33323 / DSM 20243 / BCRC 14619 / CIP 102991 / JCM 1131 / KCTC 3163 / NCIMB 11718 / NCTC 13722 / AM63).